We begin with the raw amino-acid sequence, 994 residues long: Tyrosine-protein kinase Mer (994 aa).

Positions 1-18 are cleaved as a signal peptide; that stretch reads MVLAPLLLGLLLLPALWS. Residues 19 to 497 lie on the Extracellular side of the membrane; the sequence is GGTAEKWEET…TPAPGNTDSM (479 aa). The segment at 44-78 is disordered; sequence VNHRPFSAPHSSRDQLPPPQTGRSHPAHTAAPQVT. 2 Ig-like C2-type domains span residues 75-181 and 192-268; these read PQVT…EIVS and PYFI…LTVS. N-linked (GlcNAc...) asparagine glycans are attached at residues asparagine 91, asparagine 108, asparagine 165, asparagine 202, asparagine 210, asparagine 229, asparagine 289, asparagine 311, asparagine 324, asparagine 331, asparagine 349, asparagine 384, asparagine 390, asparagine 437, and asparagine 449. A disulfide bridge links cysteine 109 with cysteine 170. The cysteines at positions 213 and 257 are disulfide-linked. Fibronectin type-III domains lie at 281–376 and 381–478; these read PPTE…TTEG and APLN…IPEH. The helical transmembrane segment at 498–518 threads the bilayer; it reads FIILGCFCGFILIGLILCISL. The Cytoplasmic segment spans residues 519 to 994; that stretch reads ALRRRVQETK…DSLEDSEVLM (476 aa). At serine 538 the chain carries Phosphoserine. The Protein kinase domain maps to 582–852; sequence LVLGKVLGEG…SVLRLQLEKL (271 aa). ATP-binding positions include 588–596 and lysine 610; that span reads LGEGEFGSV. Aspartate 718 acts as the Proton acceptor in catalysis. 4 positions are modified to phosphotyrosine; by autocatalysis: tyrosine 744, tyrosine 748, tyrosine 749, and tyrosine 867.

It belongs to the protein kinase superfamily. Tyr protein kinase family. AXL/UFO subfamily. In terms of assembly, interacts (upon activation) with TNK2; stimulates TNK2 autophosphorylation. Interacts (via N-terminus) with extracellular ligands LGALS3, TUB, TULP1 and GAS6. Interacts with VAV1 in a phosphotyrosine-independent manner. Interacts with TIMD4; this interaction enhances TIMD4-mediated efferocytosis. In terms of processing, autophosphorylated on Tyr-744, Tyr-748 and Tyr-749 in the activation loop allowing full activity. Autophosphorylated on Tyr-867 leading to recruitment of downstream partners of the signaling cascade such as PLCG2. As to expression, expressed predominantly in the hematopoietic lineages: macrophages, NK cells, NKT cells, dendritic cells and platelets.

The protein resides in the cell membrane. The catalysed reaction is L-tyrosyl-[protein] + ATP = O-phospho-L-tyrosyl-[protein] + ADP + H(+). Receptor tyrosine kinase that transduces signals from the extracellular matrix into the cytoplasm by binding to several ligands including LGALS3, TUB, TULP1 or GAS6. Regulates many physiological processes including cell survival, migration, differentiation, and phagocytosis of apoptotic cells (efferocytosis). Ligand binding at the cell surface induces autophosphorylation of MERTK on its intracellular domain that provides docking sites for downstream signaling molecules. Following activation by ligand, interacts with GRB2 or PLCG2 and induces phosphorylation of MAPK1, MAPK2, FAK/PTK2 or RAC1. MERTK signaling plays a role in various processes such as macrophage clearance of apoptotic cells, platelet aggregation, cytoskeleton reorganization and engulfment. Functions in the retinal pigment epithelium (RPE) as a regulator of rod outer segments fragments phagocytosis. Also plays an important role in inhibition of Toll-like receptors (TLRs)-mediated innate immune response by activating STAT1, which selectively induces production of suppressors of cytokine signaling SOCS1 and SOCS3. This chain is Tyrosine-protein kinase Mer (Mertk), found in Mus musculus (Mouse).